The primary structure comprises 82 residues: Protein C2 (82 aa).

This chain is Protein C2 (C2), found in Sterkiella nova (Ciliate).